The primary structure comprises 468 residues: V-type proton ATPase subunit S1 (468 aa).

A signal peptide spans 1-35 (MMAATAAAQVRAGTRWAPALCRMPWLPLMLVAAAA). A propeptide spanning residues 36-228 (ATSEQQVPLV…TAVRPSRVAR (193 aa)) is cleaved from the precursor. Over 36-417 (ATSEQQVPLV…KKFSYASDCA (382 aa)) the chain is Lumenal. Asparagine 167, asparagine 258, asparagine 271, asparagine 294, asparagine 301, asparagine 348, asparagine 355, and asparagine 404 each carry an N-linked (GlcNAc...) asparagine glycan. Residues cysteine 369 and cysteine 416 are joined by a disulfide bond. A helical transmembrane segment spans residues 418 to 438 (GFFSPGIWMGLLTSLFMLFIF). Residues 439–468 (TYGLHMILSLKTMDRFDDHKGPTITLTQIV) are Cytoplasmic-facing.

It belongs to the vacuolar ATPase subunit S1 family. In terms of assembly, accessory component of the multisubunit proton-transporting vacuolar (V)-ATPase protein pump. Interacts (via N-terminus) with ATP6AP2 (via N-terminus). Interacts with RNASEK. Interacts with TMEM106B (via C-terminus). N-glycosylated.

The protein localises to the endoplasmic reticulum membrane. It is found in the endoplasmic reticulum-Golgi intermediate compartment membrane. It localises to the cytoplasmic vesicle. Its subcellular location is the secretory vesicle. The protein resides in the synaptic vesicle membrane. The protein localises to the clathrin-coated vesicle membrane. Accessory subunit of the proton-transporting vacuolar (V)-ATPase protein pump, which is required for luminal acidification of secretory vesicles. Guides the V-type ATPase into specialized subcellular compartments, such as neuroendocrine regulated secretory vesicles or the ruffled border of the osteoclast, thereby regulating its activity. Involved in membrane trafficking and Ca(2+)-dependent membrane fusion. May play a role in the assembly of the V-type ATPase complex. In aerobic conditions, involved in intracellular iron homeostasis, thus triggering the activity of Fe(2+) prolyl hydroxylase (PHD) enzymes, and leading to HIF1A hydroxylation and subsequent proteasomal degradation. In islets of Langerhans cells, may regulate the acidification of dense-core secretory granules. The chain is V-type proton ATPase subunit S1 (ATP6AP1) from Bos taurus (Bovine).